Here is a 163-residue protein sequence, read N- to C-terminus: Putative 4-hydroxy-4-methyl-2-oxoglutarate aldolase (163 aa).

Substrate is bound by residues 76-79 and arginine 98; that span reads GDMI. Position 99 (aspartate 99) interacts with a divalent metal cation.

This sequence belongs to the class II aldolase/RraA-like family. Homotrimer. A divalent metal cation is required as a cofactor.

The catalysed reaction is 4-hydroxy-4-methyl-2-oxoglutarate = 2 pyruvate. The enzyme catalyses oxaloacetate + H(+) = pyruvate + CO2. In terms of biological role, catalyzes the aldol cleavage of 4-hydroxy-4-methyl-2-oxoglutarate (HMG) into 2 molecules of pyruvate. Also contains a secondary oxaloacetate (OAA) decarboxylase activity due to the common pyruvate enolate transition state formed following C-C bond cleavage in the retro-aldol and decarboxylation reactions. The polypeptide is Putative 4-hydroxy-4-methyl-2-oxoglutarate aldolase (Pseudomonas fluorescens (strain Pf0-1)).